A 168-amino-acid chain; its full sequence is PTS system glucose-specific EIIA component (168 aa).

One can recognise a PTS EIIA type-1 domain in the interval 38 to 142 (DEVFSNKIVG…STLTPVIISN (105 aa)). Zn(2+)-binding residues include H75 and H90. H90 (tele-phosphohistidine intermediate; for EIIA activity) is an active-site residue. Position 90 is a phosphohistidine; by HPr (H90).

It depends on Zn(2+) as a cofactor.

It localises to the cytoplasm. The phosphoenolpyruvate-dependent sugar phosphotransferase system (sugar PTS), a major carbohydrate active transport system, catalyzes the phosphorylation of incoming sugar substrates concomitantly with their translocation across the cell membrane. The enzyme II complex composed of PtsG and Crr is involved in glucose transport. The chain is PTS system glucose-specific EIIA component (crr) from Buchnera aphidicola subsp. Baizongia pistaciae (strain Bp).